The following is a 450-amino-acid chain: Glutathione reductase (450 aa).

FAD-binding residues include serine 14, glycine 15, glutamate 34, threonine 41, cysteine 42, lysine 50, and alanine 115. Residue serine 14 participates in glutathione binding. Cysteine 42 and cysteine 47 are oxidised to a cystine. NADP(+)-binding residues include alanine 175, isoleucine 178, glutamate 181, arginine 198, arginine 204, and glycine 262. An FAD-binding site is contributed by aspartate 303. Aspartate 309 provides a ligand contact to NADP(+). Threonine 311 contacts FAD. Residue arginine 319 participates in glutathione binding. Residue valine 342 coordinates NADP(+). Histidine 439 provides a ligand contact to FAD. Histidine 439 acts as the Proton acceptor in catalysis.

The protein belongs to the class-I pyridine nucleotide-disulfide oxidoreductase family. As to quaternary structure, homodimer. It depends on FAD as a cofactor.

Its subcellular location is the cytoplasm. It carries out the reaction 2 glutathione + NADP(+) = glutathione disulfide + NADPH + H(+). Catalyzes the reduction of glutathione disulfide (GSSG) to reduced glutathione (GSH). Constitutes the major mechanism to maintain a high GSH:GSSG ratio in the cytosol. This is Glutathione reductase (gor) from Streptococcus thermophilus.